Consider the following 228-residue polypeptide: Cytidylate kinase (228 aa).

17 to 25 (GPTASGKGT) is a binding site for ATP.

Belongs to the cytidylate kinase family. Type 1 subfamily.

The protein localises to the cytoplasm. It carries out the reaction CMP + ATP = CDP + ADP. The catalysed reaction is dCMP + ATP = dCDP + ADP. This is Cytidylate kinase from Burkholderia mallei (strain NCTC 10247).